We begin with the raw amino-acid sequence, 286 residues long: Bark agglutinin I polypeptide B (286 aa).

The first 31 residues, 1-31 (MASYKFKTQNSFLLLLSISFFFLLLLNKVNS), serve as a signal peptide directing secretion. An N-linked (GlcNAc...) asparagine glycan is attached at Asn148. Mn(2+) contacts are provided by Glu157 and Asp159. Residues Asp159, Asn163, and Asp167 each contribute to the Ca(2+) site. 2 residues coordinate Mn(2+): Asp167 and His172.

It belongs to the leguminous lectin family. As to quaternary structure, RPbAI is composed of two polypeptides, A and B, that associate into five different tetrameric isolectins. The A4 combination is the only one devoid of agglutination activity. Isoform B4 displays maximal agglutination activity. In terms of tissue distribution, mostly in the axial and ray parenchymal cells of the inner bark. Fewer in the axial and ray parenchymal cells of the xylem. Strong expression in bark. The lectin accumulates in the inner bark in autumn and winter and disappears in may.

In terms of biological role, bark lectins are storage proteins that probably maintain stocks of nitrogen during dormant period. Self-aggregatable molecules that can bind their own carbohydrate side chains. They could also play a role in the plant's defense against phytophagous invertebrates or herbivorous higher animals. The sequence is that of Bark agglutinin I polypeptide B from Robinia pseudoacacia (Black locust).